The following is a 918-amino-acid chain: Interleukin-6 receptor subunit beta (918 aa).

The first 22 residues, 1 to 22 (MSALRIWLMQALLIFLTTESIG), serve as a signal peptide directing secretion. At 23–618 (QLVEPCGYIY…TLKFAQGEIE (596 aa)) the chain is on the extracellular side. One can recognise an Ig-like C2-type domain in the interval 26-120 (EPCGYIYPEF…IEQNVYGITI (95 aa)). Cystine bridges form between Cys28–Cys54 and Cys48–Cys103. 4 N-linked (GlcNAc...) asparagine glycosylation sites follow: Asn43, Asn61, Asn83, and Asn131. Fibronectin type-III domains lie at 125-215 (PPDI…NFDP), 223-323 (PPHN…TYED), 328-418 (APSF…IPGS), 422-516 (ASHP…LKQA), and 518-612 (PSKG…TLKF). Cys134 and Cys144 are oxidised to a cystine. The N-linked (GlcNAc...) asparagine glycan is linked to Asn157. Cys172 and Cys181 are joined by a disulfide. 2 N-linked (GlcNAc...) asparagine glycosylation sites follow: Asn205 and Asn226. A WSXWS motif motif is present at residues 309–313 (WSDWS). 2 N-linked (GlcNAc...) asparagine glycosylation sites follow: Asn382 and Asn389. Residues Cys457 and Cys465 are joined by a disulfide bond. Residues Asn477 and Asn552 are each glycosylated (N-linked (GlcNAc...) asparagine). A helical membrane pass occupies residues 619-640 (AIVVPVCLAFLLTTLLGVLFCF). The Cytoplasmic portion of the chain corresponds to 641 to 918 (NKRDLIKKHI…TVRQGGYMPQ (278 aa)). The Box 1 motif signature appears at 650–658 (IWPNVPDPS). 4 disordered regions span residues 659–679 (KSHI…NSKD), 720–754 (TEGH…STAS), 773–795 (VQVF…PEDL), and 817–842 (SCSQ…GSEE). 2 positions are modified to phosphoserine: Ser660 and Ser666. Positions 730–751 (SSCMSSSRPSISSSEENESAQS) are enriched in low complexity. The span at 773–785 (VQVFSRSESTQPL) shows a compositional bias: polar residues. Phosphoserine is present on residues Ser781, Ser788, Ser828, and Ser838.

The protein belongs to the type I cytokine receptor family. Type 2 subfamily. In terms of assembly, component of a hexamer of two molecules each of IL6, IL6R and IL6ST; associates with the complex IL6:IL6R but does not interact with IL6. Forms heterodimers composed of LIFR and IL6ST (type I OSM receptor) which are activated by LIF and OSM. Also forms heterodimers composed of OSMR and IL6ST (type II receptor) which are activated by OSM but not by LIF. Interacts with HCK. Interacts with INPP5D/SHIP1. Interacts with SRC and YES. Interacts with ARMH4; this interaction prevents IL6ST protein homodimerization and bridges ARMH4 with IL6R and STAT3 and therefore inhibits phosphorylation of STAT3 at 'Tyr-705'. Post-translationally, phosphorylation of Ser-781 down-regulates cell surface expression. In terms of processing, heavily N-glycosylated. Glycosylation is required for protein stability and localization in plasma membrane but not for ligand binding. Found in hepatocytes, astrocytes, fibroblasts and endothelial cells.

The protein localises to the cell membrane. Signal-transducing molecule. The receptor systems for IL6, LIF, OSM, CNTF, IL11, CTF1 and BSF3 can utilize IL6ST for initiating signal transmission. Binding of IL6 to IL6R induces IL6ST homodimerization and formation of a high-affinity receptor complex, which activates the intracellular JAK-MAPK and JAK-STAT3 signaling pathways. That causes phosphorylation of IL6ST tyrosine residues which in turn activates STAT3. In parallel, the IL6 signaling pathway induces the expression of two cytokine receptor signaling inhibitors, SOCS1 and SOCS3, which inhibit JAK and terminate the activity of the IL6 signaling pathway as a negative feedback loop. Also activates the yes-associated protein 1 (YAP) and NOTCH pathways to control inflammation-induced epithelial regeneration, independently of STAT3. Mediates signals which regulate immune response, hematopoiesis, pain control and bone metabolism. Has a role in embryonic development. Essential for survival of motor and sensory neurons and for differentiation of astrocytes. Required for expression of TRPA1 in nociceptive neurons. Required for the maintenance of PTH1R expression in the osteoblast lineage and for the stimulation of PTH-induced osteoblast differentiation. Required for normal trabecular bone mass and cortical bone composition. This chain is Interleukin-6 receptor subunit beta, found in Rattus norvegicus (Rat).